The primary structure comprises 530 residues: Putative sulfate transporter YvdB (530 aa).

The next 10 membrane-spanning stretches (helical) occupy residues 19 to 39 (LIAG…FAIA), 41 to 61 (GVEP…ISLF), 68 to 88 (IGGP…QYGL), 91 to 111 (LLIA…FKLG), 121 to 141 (VIVG…IANF), 164 to 184 (LGTF…ILLV), 192 to 212 (VPGA…FFPD), 241 to 261 (MVML…ESIL), 313 to 333 (AVSP…LLVF), and 384 to 404 (VLFD…VFFI). The 111-residue stretch at 420-530 (PVLAKREDPS…FFDHHDEITG (111 aa)) folds into the STAS domain.

It belongs to the SLC26A/SulP transporter (TC 2.A.53) family.

Its subcellular location is the cell membrane. The sequence is that of Putative sulfate transporter YvdB (yvdB) from Bacillus subtilis (strain 168).